A 588-amino-acid chain; its full sequence is Adenine deaminase (588 aa).

This sequence belongs to the metallo-dependent hydrolases superfamily. Adenine deaminase family. As to quaternary structure, homodimer. The cofactor is Mn(2+).

It catalyses the reaction adenine + H2O + H(+) = hypoxanthine + NH4(+). This Escherichia coli O45:K1 (strain S88 / ExPEC) protein is Adenine deaminase.